The sequence spans 130 residues: Fumarate reductase subunit C (130 aa).

3 helical membrane passes run 30 to 50 (EGTS…VFAL), 60 to 80 (FVSF…LFAA), and 110 to 130 (IKAL…VALL).

This sequence belongs to the FrdC family. In terms of assembly, part of an enzyme complex containing four subunits: a flavoprotein (FrdA), an iron-sulfur protein (FrdB), and two hydrophobic anchor proteins (FrdC and FrdD).

It is found in the cell inner membrane. In terms of biological role, two distinct, membrane-bound, FAD-containing enzymes are responsible for the catalysis of fumarate and succinate interconversion; fumarate reductase is used in anaerobic growth, and succinate dehydrogenase is used in aerobic growth. Anchors the catalytic components of the fumarate reductase complex to the cell inner membrane, binds quinones. In Yersinia pseudotuberculosis serotype O:1b (strain IP 31758), this protein is Fumarate reductase subunit C.